The primary structure comprises 530 residues: Alkali-sensitive linkage protein 1 (530 aa).

An N-terminal signal peptide occupies residues 1–18; that stretch reads MRTTFATVALAFLSTVGA. Asn-55 carries N-linked (GlcNAc...) asparagine glycosylation. Residues 69 to 90 form a disordered region; it reads SVTESSDDGASTALPTTSTESV. 2 N-linked (GlcNAc...) asparagine glycosylation sites follow: Asn-120 and Asn-128.

The protein localises to the endoplasmic reticulum. The protein resides in the golgi apparatus. It is found in the secreted. Its subcellular location is the cell wall. The polypeptide is Alkali-sensitive linkage protein 1 (asl1) (Schizosaccharomyces pombe (strain 972 / ATCC 24843) (Fission yeast)).